We begin with the raw amino-acid sequence, 479 residues long: Aspartyl/glutamyl-tRNA(Asn/Gln) amidotransferase subunit B (479 aa).

This sequence belongs to the GatB/GatE family. GatB subfamily. Heterotrimer of A, B and C subunits.

The enzyme catalyses L-glutamyl-tRNA(Gln) + L-glutamine + ATP + H2O = L-glutaminyl-tRNA(Gln) + L-glutamate + ADP + phosphate + H(+). It carries out the reaction L-aspartyl-tRNA(Asn) + L-glutamine + ATP + H2O = L-asparaginyl-tRNA(Asn) + L-glutamate + ADP + phosphate + 2 H(+). In terms of biological role, allows the formation of correctly charged Asn-tRNA(Asn) or Gln-tRNA(Gln) through the transamidation of misacylated Asp-tRNA(Asn) or Glu-tRNA(Gln) in organisms which lack either or both of asparaginyl-tRNA or glutaminyl-tRNA synthetases. The reaction takes place in the presence of glutamine and ATP through an activated phospho-Asp-tRNA(Asn) or phospho-Glu-tRNA(Gln). The sequence is that of Aspartyl/glutamyl-tRNA(Asn/Gln) amidotransferase subunit B from Streptococcus equi subsp. zooepidemicus (strain MGCS10565).